Here is a 466-residue protein sequence, read N- to C-terminus: Vimentin (466 aa).

The span at 1–13 shows a compositional bias: low complexity; it reads MSTRSVSSSSYRR. The interval 1–31 is disordered; that stretch reads MSTRSVSSSSYRRMFGGPGTASRPSSTRSYV. Serine 2 is modified (N-acetylserine). Positions 2-95 are head; sequence STRSVSSSSY…FSLADAINTE (94 aa). At serine 5 the chain carries Phosphoserine. Serine 7 is modified (phosphoserine; by PKA and PKC; alternate). Serine 7 carries O-linked (GlcNAc) serine; alternate glycosylation. Phosphoserine is present on serine 8. Phosphoserine; by PKC is present on residues serine 9 and serine 10. Threonine 20 bears the Phosphothreonine mark. Serine 25 carries the phosphoserine; by PKA and PKC modification. Serine 26 is modified (phosphoserine; by PKC). A glycan (O-linked (GlcNAc) threonine) is linked at threonine 33. The O-linked (GlcNAc) serine; alternate glycan is linked to serine 34. Position 34 is a phosphoserine; by PKC; alternate (serine 34). Serine 39 carries the phosphoserine; by CaMK2, PKA, PKC and ROCK2 modification. Serine 42 is subject to Phosphoserine; by PKC. At serine 49 the chain carries Phosphoserine. Phosphotyrosine is present on tyrosine 53. The residue at position 55 (serine 55) is a Phosphoserine. Serine 56 carries the post-translational modification Phosphoserine; by CDK5 and CDK1. Tyrosine 61 carries the post-translational modification Phosphotyrosine. Residue serine 66 is modified to Phosphoserine; by PKA and PKC. Serine 72 carries the phosphoserine; by AURKB and ROCK2 modification. The residue at position 83 (serine 83) is a Phosphoserine; by CaMK2. Serine 87 carries the post-translational modification Phosphoserine. The segment at 96 to 131 is coil 1A; the sequence is FKNTRTNEKVELQELNDRFANYIDKVRFLEQQNKIL. Residues 96–131 adopt a coiled-coil conformation; sequence FKNTRTNEKVELQELNDRFANYIDKVRFLEQQNKIL. The 309-residue stretch at 103-411 folds into the IF rod domain; the sequence is EKVELQELND…KLLEGEESRI (309 aa). Lysine 104 participates in a covalent cross-link: Glycyl lysine isopeptide (Lys-Gly) (interchain with G-Cter in SUMO2). Tyrosine 117 bears the Phosphotyrosine mark. N6-acetyllysine; alternate occurs at positions 120, 129, and 139. 2 positions are modified to N6-succinyllysine; alternate: lysine 120 and lysine 129. Residues lysine 120, lysine 129, and lysine 139 each participate in a glycyl lysine isopeptide (Lys-Gly) (interchain with G-Cter in SUMO2); alternate cross-link. Residues 132-153 form a linker 1 region; it reads LAELEQLKGQGKSRLGDLYEEE. Serine 144 carries the phosphoserine modification. A coiled-coil region spans residues 154-245; that stretch reads MRELRRQVDQ…KLHDEEIQEL (92 aa). Residues 154 to 245 are coil 1B; the sequence is MRELRRQVDQ…KLHDEEIQEL (92 aa). Lysine 168 is subject to N6-acetyllysine. Lysine 188 is modified (N6-acetyllysine; alternate). N6-succinyllysine; alternate is present on lysine 188. Position 214 is a phosphoserine (serine 214). Position 223 is an N6-acetyllysine; alternate (lysine 223). Lysine 223 participates in a covalent cross-link: Glycyl lysine isopeptide (Lys-Gly) (interchain with G-Cter in SUMO2); alternate. A Phosphoserine modification is found at serine 226. Lysine 235 is subject to N6-acetyllysine. The interval 246-268 is linker 12; that stretch reads QAQIQEQHVQIDMDVSKPDLTAA. Lysine 262 is covalently cross-linked (Glycyl lysine isopeptide (Lys-Gly) (interchain with G-Cter in SUMO2)). The coil 2 stretch occupies residues 269–407; sequence LRDVRQQYES…ATYRKLLEGE (139 aa). The residue at position 294 (lysine 294) is an N6-acetyllysine; alternate. Residue lysine 294 is modified to N6-succinyllysine; alternate. Lysine 294 is covalently cross-linked (Glycyl lysine isopeptide (Lys-Gly) (interchain with G-Cter in SUMO2); alternate). A Phosphoserine modification is found at serine 299. Residues 303–407 are a coiled coil; it reads NRNNDALRQA…ATYRKLLEGE (105 aa). A Glycyl lysine isopeptide (Lys-Gly) (interchain with G-Cter in SUMO2) cross-link involves residue lysine 313. Residues 326–329 carry the [IL]-x-C-x-x-[DE] motif motif; the sequence is LTCE. Lysine 373 carries the N6-acetyllysine; alternate modification. Lysine 373 is covalently cross-linked (Glycyl lysine isopeptide (Lys-Gly) (interchain with G-Cter in SUMO2); alternate). The tail stretch occupies residues 408–466; that stretch reads ESRISLPLPNFSSLNLRETNLDSLPLVDTHSKRTLLIKTVETRDGQVINETSQHHDDLE. Residues serine 409, serine 412, serine 419, and serine 420 each carry the phosphoserine modification. Phosphothreonine is present on threonine 426. The residue at position 430 (serine 430) is a Phosphoserine. Position 436 is a phosphothreonine (threonine 436). Serine 438 carries the post-translational modification Phosphoserine. Residue lysine 439 forms a Glycyl lysine isopeptide (Lys-Gly) (interchain with G-Cter in SUMO2) linkage. Residue lysine 445 is modified to N6-acetyllysine; alternate. At lysine 445 the chain carries N6-succinyllysine; alternate. Lysine 445 is covalently cross-linked (Glycyl lysine isopeptide (Lys-Gly) (interchain with G-Cter in SUMO2); alternate). Lysine 445 participates in a covalent cross-link: Glycyl lysine isopeptide (Lys-Gly) (interchain with G-Cter in SUMO1); alternate. A phosphothreonine mark is found at threonine 446 and threonine 458. Serine 459 bears the Phosphoserine mark.

It belongs to the intermediate filament family. Homomer assembled from elementary dimers. Identified in complexes that contain VIM, EZR, AHNAK, BFSP1, BFSP2, ANK2, PLEC, PRX and spectrin. Interacts with BCAS3. Interacts with LGSN. Interacts with SYNM. Interacts (via rod region) with PLEC (via CH 1 domain). Interacts with STK33. Interacts with LARP6. Interacts with RAB8B. Interacts with TOR1A; the interaction associates TOR1A with the cytoskeleton. Interacts with TOR1AIP1. Interacts with TOR1AIP1. Interacts with DIAPH1. Interacts with EPPK1; interaction is dependent of higher-order structure of intermediate filament. Interacts with the non-receptor tyrosine kinase SRMS; the interaction leads to phosphorylation of VIM. Interacts with NOD2. Interacts (via head region) with CORO1C. Interacts with HDGF. Interacts with PRKCE (via phorbol-ester/DAG-type 2 domain). Interacts with BFSP2. Interacts with PPL. Interacts with PKP1 and PKP2. Interacts with SCRIB (via PDZ domains); the interaction protects SCRIB from proteasomal degradation and facilitates SCRIB localization to intermediate filaments, the interaction is reduced by cell contact inhibition. In terms of processing, one of the most prominent phosphoproteins in various cells of mesenchymal origin. Phosphorylation is enhanced during cell division, at which time vimentin filaments are significantly reorganized. Phosphorylation by PKN1 inhibits the formation of filaments. Filament disassembly during mitosis is promoted by phosphorylation at Ser-55 as well as by nestin. Phosphorylated at Ser-56 by CDK5 during neutrophil secretion in the cytoplasm. Phosphorylated by STK33. Phosphorylated on tyrosine residues by SRMS. S-nitrosylation is induced by interferon-gamma and oxidatively-modified low-densitity lipoprotein (LDL(ox)) possibly implicating the iNOS-S100A8/9 transnitrosylase complex.

The protein localises to the cytoplasm. It localises to the cytoskeleton. It is found in the nucleus matrix. Its subcellular location is the cell membrane. Vimentins are class-III intermediate filaments found in various non-epithelial cells, especially mesenchymal cells. Vimentin is attached to the nucleus, endoplasmic reticulum, and mitochondria, either laterally or terminally. Plays a role in cell directional movement, orientation, cell sheet organization and Golgi complex polarization at the cell migration front. Protects SCRIB from proteasomal degradation and facilitates its localization to intermediate filaments in a cell contact-mediated manner. Its function is as follows. Involved with LARP6 in the stabilization of type I collagen mRNAs for CO1A1 and CO1A2. This is Vimentin (VIM) from Bos taurus (Bovine).